A 226-amino-acid polypeptide reads, in one-letter code: Ribose-5-phosphate isomerase A (226 aa).

Substrate is bound by residues 26-29 (TGST), 82-85 (DGAD), and 95-98 (KGGG). The active-site Proton acceptor is the glutamate 104. Substrate is bound at residue lysine 122.

Belongs to the ribose 5-phosphate isomerase family. In terms of assembly, homodimer.

It carries out the reaction aldehydo-D-ribose 5-phosphate = D-ribulose 5-phosphate. It functions in the pathway carbohydrate degradation; pentose phosphate pathway; D-ribose 5-phosphate from D-ribulose 5-phosphate (non-oxidative stage): step 1/1. Its function is as follows. Catalyzes the reversible conversion of ribose-5-phosphate to ribulose 5-phosphate. This is Ribose-5-phosphate isomerase A from Streptococcus thermophilus (strain ATCC BAA-250 / LMG 18311).